We begin with the raw amino-acid sequence, 448 residues long: Bifunctional protein GlmU (448 aa).

Residues 1–232 (MTARSSLTIV…EDEVRGINTK (232 aa)) are pyrophosphorylase. UDP-N-acetyl-alpha-D-glucosamine contacts are provided by residues 11 to 14 (LAAG), Lys25, Gln78, and 83 to 84 (GT). Asp108 is a binding site for Mg(2+). Positions 144, 158, 173, and 230 each coordinate UDP-N-acetyl-alpha-D-glucosamine. A Mg(2+)-binding site is contributed by Asn230. A linker region spans residues 233 to 253 (AQLAQAEAAMQARLRQAAMDA). The segment at 254–448 (GVTLIAPETV…FRNAKLRQTK (195 aa)) is N-acetyltransferase. Residues Arg319 and Lys337 each coordinate UDP-N-acetyl-alpha-D-glucosamine. Catalysis depends on His349, which acts as the Proton acceptor. UDP-N-acetyl-alpha-D-glucosamine contacts are provided by Tyr352 and Asn363. Acetyl-CoA-binding positions include Ala366, 372–373 (NY), Ser409, and Arg426. A disordered region spans residues 427–448 (SPQTTKEGAAARFRNAKLRQTK).

This sequence in the N-terminal section; belongs to the N-acetylglucosamine-1-phosphate uridyltransferase family. In the C-terminal section; belongs to the transferase hexapeptide repeat family. As to quaternary structure, homotrimer. Requires Mg(2+) as cofactor.

The protein localises to the cytoplasm. The catalysed reaction is alpha-D-glucosamine 1-phosphate + acetyl-CoA = N-acetyl-alpha-D-glucosamine 1-phosphate + CoA + H(+). It carries out the reaction N-acetyl-alpha-D-glucosamine 1-phosphate + UTP + H(+) = UDP-N-acetyl-alpha-D-glucosamine + diphosphate. The protein operates within nucleotide-sugar biosynthesis; UDP-N-acetyl-alpha-D-glucosamine biosynthesis; N-acetyl-alpha-D-glucosamine 1-phosphate from alpha-D-glucosamine 6-phosphate (route II): step 2/2. It participates in nucleotide-sugar biosynthesis; UDP-N-acetyl-alpha-D-glucosamine biosynthesis; UDP-N-acetyl-alpha-D-glucosamine from N-acetyl-alpha-D-glucosamine 1-phosphate: step 1/1. Its pathway is bacterial outer membrane biogenesis; LPS lipid A biosynthesis. Its function is as follows. Catalyzes the last two sequential reactions in the de novo biosynthetic pathway for UDP-N-acetylglucosamine (UDP-GlcNAc). The C-terminal domain catalyzes the transfer of acetyl group from acetyl coenzyme A to glucosamine-1-phosphate (GlcN-1-P) to produce N-acetylglucosamine-1-phosphate (GlcNAc-1-P), which is converted into UDP-GlcNAc by the transfer of uridine 5-monophosphate (from uridine 5-triphosphate), a reaction catalyzed by the N-terminal domain. This Bradyrhizobium sp. (strain ORS 278) protein is Bifunctional protein GlmU.